The chain runs to 1130 residues: 3-hydroxy-3-methylglutaryl-coenzyme A reductase 1 (1130 aa).

Residues 1-46 (MATSLITRKLRSAEATNDVEPGWLKRQVTGVLQSISSHACQHPIHT) lie on the Cytoplasmic side of the membrane. A helical transmembrane segment spans residues 47–67 (IVVIALLASTTYVGLLEGSLF). Residues 68–242 (DSVRNSRNIA…DLIKHAETID (175 aa)) are Lumenal-facing. N-linked (GlcNAc...) asparagine glycosylation occurs at N148. The region spanning 242–415 (DIVIMTLGYL…FTFYTTILCI (174 aa)) is the SSD domain. The helical transmembrane segment at 243 to 263 (IVIMTLGYLSMHLSFVSLFFS) threads the bilayer. Over 264 to 270 (MRRLGSN) the chain is Cytoplasmic. A helical membrane pass occupies residues 271–291 (FWLAATVLFSGVFAFLFGLLV). Over 292-296 (TTKLG) the chain is Lumenal. A helical transmembrane segment spans residues 297–317 (VPINVLLLSEGLPFLVVTIGF). Over 318 to 366 (EKPIILTRAVLTAAADNRGRAGQASSSTTKSIQDSIQTAIKEQGFEIIR) the chain is Cytoplasmic. Residues 367 to 387 (DYCIEIAILIAGAASGVQGGL) traverse the membrane as a helical segment. Residues 388 to 389 (RQ) are Lumenal-facing. A helical transmembrane segment spans residues 390-410 (FCFLAAWILFFDCVLLFTFYT). Residues 411–476 (TILCIKLEIN…RKLRSSSVRR (66 aa)) lie on the Cytoplasmic side of the membrane. A helical transmembrane segment spans residues 477–497 (FKILMVGGFVLVNVVNLSTIP). Residues 498–601 (FRDSSQGAGL…ESLLKSIEDP (104 aa)) are Lumenal-facing. A helical transmembrane segment spans residues 602-622 (IISKWIIAALTLSIILNGYLF). Residues 623–1130 (NAARWSIKEP…ARGLTMSSSE (508 aa)) lie on the Cytoplasmic side of the membrane. The Charge relay system role is filled by E792. 798-804 (STSRGAK) is a CoA binding site. NADP(+) is bound by residues 859 to 861 (SRF) and 886 to 894 (DAMGMNMIS). The active-site Charge relay system is the K926. A CoA-binding site is contributed by 955–957 (VLK). Residue D1002 is the Charge relay system of the active site. 1097–1098 (AH) is a CoA binding site. H1098 functions as the Proton donor in the catalytic mechanism. Residue 1102–1103 (NR) coordinates NADP(+). Residues 1103–1122 (RSAATTRTSTPVSAAVSAAR) show a composition bias toward low complexity. Positions 1103 to 1130 (RSAATTRTSTPVSAAVSAARGLTMSSSE) are disordered.

Belongs to the HMG-CoA reductase family.

Its subcellular location is the endoplasmic reticulum membrane. It carries out the reaction (R)-mevalonate + 2 NADP(+) + CoA = (3S)-3-hydroxy-3-methylglutaryl-CoA + 2 NADPH + 2 H(+). The protein operates within metabolic intermediate biosynthesis; (R)-mevalonate biosynthesis; (R)-mevalonate from acetyl-CoA: step 3/3. HMG-CoA reductase; part of the first module of ergosterol biosynthesis pathway that includes the early steps of the pathway, conserved across all eukaryotes, and which results in the formation of mevalonate from acetyl-coenzyme A (acetyl-CoA). Hmg1 and hmg2 catalyze the reduction of hydroxymethylglutaryl-CoA (HMG-CoA) to mevalonate. The first module starts with the action of the cytosolic acetyl-CoA acetyltransferase erg10B that catalyzes the formation of acetoacetyl-CoA. The hydroxymethylglutaryl-CoA synthases erg13A and erg13B then condense acetyl-CoA with acetoacetyl-CoA to form HMG-CoA. The rate-limiting step of the early module is the reduction to mevalonate by the 3-hydroxy-3-methylglutaryl-coenzyme A (HMG-CoA) reductases hmg1 and hmg2. Mevalonate is also a precursor for the extracellular siderophore triacetylfusarinine C (TAFC). The protein is 3-hydroxy-3-methylglutaryl-coenzyme A reductase 1 of Aspergillus fumigatus (strain ATCC MYA-4609 / CBS 101355 / FGSC A1100 / Af293) (Neosartorya fumigata).